A 151-amino-acid chain; its full sequence is Large ribosomal subunit protein bL9 (151 aa).

The protein belongs to the bacterial ribosomal protein bL9 family.

Binds to the 23S rRNA. The protein is Large ribosomal subunit protein bL9 of Chlorobium luteolum (strain DSM 273 / BCRC 81028 / 2530) (Pelodictyon luteolum).